The primary structure comprises 526 residues: Cytochrome P450 monooxygenase patI (526 aa).

At 1–6 the chain is on the cytoplasmic side; sequence MDILQL. The chain crosses the membrane as a helical span at residues 7-29; the sequence is APTHLLAILLSSTSALFLITYLL. Residues 30-526 lie on the Lumenal side of the membrane; it reads RAGHRPSDLP…EAQEVFARFD (497 aa). Residue N81 is glycosylated (N-linked (GlcNAc...) asparagine). C446 serves as a coordination point for heme.

Belongs to the cytochrome P450 family. It depends on heme as a cofactor.

It localises to the endoplasmic reticulum membrane. It carries out the reaction 3-hydroxybenzyl alcohol + reduced [NADPH--hemoprotein reductase] + O2 = gentisyl alcohol + oxidized [NADPH--hemoprotein reductase] + H2O + H(+). It participates in mycotoxin biosynthesis; patulin biosynthesis. Its function is as follows. Cytochrome P450 monooxygenase; part of the gene cluster that mediates the biosynthesis of patulin, an acetate-derived tetraketide mycotoxin produced by several fungal species that shows antimicrobial properties against several bacteria. PatI catalyzes the conversion of m-hydroxybenzyl alcohol into gentisyl alcohol. The pathway begins with the synthesis of 6-methylsalicylic acid by the polyketide synthase (PKS) patK via condensation of acetate and malonate units. The 6-methylsalicylic acid decarboxylase patG then catalyzes the decarboxylation of 6-methylsalicylic acid to yield m-cresol (also known as 3-methylphenol). These first reactions occur in the cytosol. The intermediate m-cresol is then transported into the endoplasmic reticulum where the cytochrome P450 monooxygenase patH converts it to m-hydroxybenzyl alcohol, which is further converted to gentisyl alcohol by the cytochrome P450 monooxygenase patI. The oxidoreductases patJ and patO further convert gentisyl alcohol to isoepoxydon in the vacuole. PatN catalyzes then the transformation of isoepoxydon into phyllostine. The cluster protein patF is responsible for the conversion from phyllostine to neopatulin whereas the alcohol dehydrogenase patD converts neopatulin to E-ascladiol. The steps between isoepoxydon and E-ascladiol occur in the cytosol, and E-ascladiol is probably secreted to the extracellular space by one of the cluster-specific transporters patC or patM. Finally, the secreted patulin synthase patE catalyzes the conversion of E-ascladiol to patulin. This is Cytochrome P450 monooxygenase patI from Penicillium expansum (Blue mold rot fungus).